Reading from the N-terminus, the 834-residue chain is Glycerol-3-phosphate acyltransferase (834 aa).

The HXXXXD motif motif lies at 309 to 314 (CHRSHI).

Belongs to the GPAT/DAPAT family.

It localises to the cell inner membrane. The catalysed reaction is sn-glycerol 3-phosphate + an acyl-CoA = a 1-acyl-sn-glycero-3-phosphate + CoA. Its pathway is phospholipid metabolism; CDP-diacylglycerol biosynthesis; CDP-diacylglycerol from sn-glycerol 3-phosphate: step 1/3. The protein is Glycerol-3-phosphate acyltransferase of Pseudomonas paraeruginosa (strain DSM 24068 / PA7) (Pseudomonas aeruginosa (strain PA7)).